The following is a 380-amino-acid chain: uncharacterized protein (380 aa).

The next 9 helical transmembrane spans lie at 15-35, 45-65, 75-95, 98-118, 123-143, 182-202, 217-237, 303-323, and 341-361; these read LFHPVSIVIIGHLMIFILAFP, LFKILGVLSIFIVGFFLPFIF, ILYLSFLLLSFLSIFGAFKIT, LFLSIAYLLFILIIAELFVKF, IFVDILFSIGIIAFLLIVLIY, IIAFMILVLLGYKAGVLMLFI, MVLLAFALLIFLGIMGKIILL, GTIYLDFGIFGGLFAMLLGVI, and LLLAYCEIGINYGFLVVLSLL.

Its subcellular location is the cell membrane. This is an uncharacterized protein from Methanocaldococcus jannaschii (strain ATCC 43067 / DSM 2661 / JAL-1 / JCM 10045 / NBRC 100440) (Methanococcus jannaschii).